Consider the following 462-residue polypeptide: Jasmonoyl--L-amino acid synthetase GH3.3 (462 aa).

Ser-103 lines the ATP pocket. Ser-106 contacts jasmonate. Residues Thr-126, Asn-172, and 337–342 (GASEGW) each bind ATP. 170–174 (TTNVY) serves as a coordination point for an L-alpha-amino acid. Residues 334–337 (AEYG) and Ser-339 contribute to the jasmonate site.

This sequence belongs to the IAA-amido conjugating enzyme family. As to expression, expressed in green shoots and flowers.

It catalyses the reaction a jasmonate + an L-alpha-amino acid + ATP = a jasmonyl-L-amino acid + AMP + diphosphate + H(+). Catalyzes the synthesis of jasmonate-amino acid conjugates by adenylation. Catalyzes the conjugation of jasmonate (JA) to Ile when expressed in a heterologous system (E.coli). Catalyzes in vitro the conjugation of jasmonate (JA) to Ile, Phe, Leu, Met, Val and Trp. May catalyze the synthesis of indole-3-acetic acid (IAA)-amino acid conjugates, providing a mechanism for the plant to cope with the presence of excess auxin. The chain is Jasmonoyl--L-amino acid synthetase GH3.3 from Oryza sativa subsp. japonica (Rice).